The sequence spans 825 residues: Putative NAD(+)--arginine ADP-ribosyltransferase Mav (825 aa).

A disordered region spans residues 435-673 (ALKGLKKPPG…SGSDHHLPLH (239 aa)). 2 stretches are compositionally biased toward pro residues: residues 443 to 457 (PGVPKPPEVKPPAAP) and 468 to 491 (SGKPGPVAPSGKPAPGPADGPLPH). The span at 560 to 579 (PAADTPAPSAPAASMSAASG) shows a compositional bias: low complexity. Over residues 580-589 (PPMPPTPSLP) the composition is skewed to pro residues. Residues 590–599 (EPASLPSGPS) show a composition bias toward low complexity. The region spanning 650–825 (KNANGHGPHD…GRTIIEMIER (176 aa)) is the TR mART core domain. Residues 656 to 670 (GPHDASLDSGSDHHL) are compositionally biased toward basic and acidic residues. NAD(+)-binding positions include 687-699 (TGPGYQELNFALR), 730-733 (RGTN), and E750. R730 is a catalytic residue. Catalysis depends on residues S755 and E795. E795 contributes to the NAD(+) binding site.

The protein belongs to the Arg-specific ADP-ribosyltransferase family.

Its subcellular location is the secreted. The enzyme catalyses L-arginyl-[protein] + NAD(+) = N(omega)-(ADP-D-ribosyl)-L-arginyl-[protein] + nicotinamide + H(+). Functionally, a probable mono(ADP-ribosyl)transferase, it may ADP-ribosylate Arg in target protein(s). The sequence is that of Putative NAD(+)--arginine ADP-ribosyltransferase Mav from Mycobacterium avium (strain 104).